The primary structure comprises 100 residues: MHFTQREQDKLMLVIAADLARRRQQRGLKLNYPEAVAIISFELLEGARDGKTVAELMSYGKQILNEDDVMEGVADMLTEMEIEATFPDGTKLITVHHPIV.

Belongs to the urease gamma subunit family. Heterotrimer of UreA (gamma), UreB (beta) and UreC (alpha) subunits. Three heterotrimers associate to form the active enzyme.

The protein resides in the cytoplasm. It catalyses the reaction urea + 2 H2O + H(+) = hydrogencarbonate + 2 NH4(+). Its pathway is nitrogen metabolism; urea degradation; CO(2) and NH(3) from urea (urease route): step 1/1. In Staphylococcus saprophyticus subsp. saprophyticus (strain ATCC 15305 / DSM 20229 / NCIMB 8711 / NCTC 7292 / S-41), this protein is Urease subunit gamma.